Here is a 118-residue protein sequence, read N- to C-terminus: Holo-[acyl-carrier-protein] synthase (118 aa).

Mg(2+) contacts are provided by D5 and E51.

It belongs to the P-Pant transferase superfamily. AcpS family. Mg(2+) serves as cofactor.

The protein localises to the cytoplasm. The enzyme catalyses apo-[ACP] + CoA = holo-[ACP] + adenosine 3',5'-bisphosphate + H(+). Transfers the 4'-phosphopantetheine moiety from coenzyme A to a Ser of acyl-carrier-protein. This Helicobacter pylori (strain P12) protein is Holo-[acyl-carrier-protein] synthase.